The primary structure comprises 350 residues: D-alanine--D-alanine ligase (350 aa).

Residues 133-334 (NDIFELNKIP…VSEVFDNLIG (202 aa)) form the ATP-grasp domain. 161 to 216 (FEKTSKAVYVKPCNAGSSVGVMRAETEEELEKAIQNAFQYDRRILVEEEIIGPELQ) contributes to the ATP binding site. Residues Asp-288, Glu-300, and Asn-302 each coordinate Mg(2+).

This sequence belongs to the D-alanine--D-alanine ligase family. Mg(2+) serves as cofactor. Mn(2+) is required as a cofactor.

The protein localises to the cytoplasm. The catalysed reaction is 2 D-alanine + ATP = D-alanyl-D-alanine + ADP + phosphate + H(+). Its pathway is cell wall biogenesis; peptidoglycan biosynthesis. Cell wall formation. This Finegoldia magna (strain ATCC 29328 / DSM 20472 / WAL 2508) (Peptostreptococcus magnus) protein is D-alanine--D-alanine ligase.